A 194-amino-acid polypeptide reads, in one-letter code: Large ribosomal subunit protein eL15 (194 aa).

The tract at residues 164–194 (SAGKKGRGLRNKGKGAEKIRPSIRANEGKGK) is disordered. A compositionally biased stretch (basic residues) spans 167–176 (KKGRGLRNKG). Over residues 177 to 194 (KGAEKIRPSIRANEGKGK) the composition is skewed to basic and acidic residues.

This sequence belongs to the eukaryotic ribosomal protein eL15 family.

The polypeptide is Large ribosomal subunit protein eL15 (rpl15e) (Pyrococcus abyssi (strain GE5 / Orsay)).